The primary structure comprises 85 residues: MSSLDKTMHFDFNQNKGKNIRDTLEDVYKALEEKGYSPINQIVGYLLSGDPAYIPRHNDARNLILKHERDEIIEELVKSYLGKDK.

It belongs to the UPF0297 family.

This chain is UPF0297 protein LBUL_1485, found in Lactobacillus delbrueckii subsp. bulgaricus (strain ATCC BAA-365 / Lb-18).